Consider the following 498-residue polypeptide: Glutamate--tRNA ligase (498 aa).

The 'HIGH' region motif lies at 11–21; the sequence is PSPTGHLHIGN. Positions 261 to 265 match the 'KMSKS' region motif; the sequence is KLSKR. An ATP-binding site is contributed by Lys-264.

It belongs to the class-I aminoacyl-tRNA synthetase family. Glutamate--tRNA ligase type 1 subfamily. In terms of assembly, monomer.

The protein resides in the cytoplasm. The enzyme catalyses tRNA(Glu) + L-glutamate + ATP = L-glutamyl-tRNA(Glu) + AMP + diphosphate. Its function is as follows. Catalyzes the attachment of glutamate to tRNA(Glu) in a two-step reaction: glutamate is first activated by ATP to form Glu-AMP and then transferred to the acceptor end of tRNA(Glu). This chain is Glutamate--tRNA ligase, found in Oenococcus oeni (strain ATCC BAA-331 / PSU-1).